A 398-amino-acid chain; its full sequence is Cathepsin D (398 aa).

Positions 1 to 20 (MAPRGLLVLLLLALVGPCAA) are cleaved as a signal peptide. Residues 21–63 (LIRIPLTKFTSTRRMLTEVGSEIPDMNAITQFLKFKLGFADLA) constitute a propeptide, activation peptide. The 318-residue stretch at 78–395 (YYGEIGIGTP…DRDNDSVGFA (318 aa)) folds into the Peptidase A1 domain. The active site involves D96. An intrachain disulfide couples C109 to C116. 2 N-linked (GlcNAc...) asparagine glycosylation sites follow: N133 and N251. Cysteines 274 and 278 form a disulfide. The active site involves D283. Residues C317 and C354 are joined by a disulfide bond.

Belongs to the peptidase A1 family. As to quaternary structure, consists of a light chain and a heavy chain. Oocytic yolk, preovulatory follicles, liver.

Its subcellular location is the lysosome. The enzyme catalyses Specificity similar to, but narrower than, that of pepsin A. Does not cleave the 4-Gln-|-His-5 bond in B chain of insulin.. In terms of biological role, acid protease active in intracellular protein breakdown. In chicken it is a key enzyme for yolk formation as it is capable of catalyzing intra oocytic break down of protein components of both vitellogenin and VLDL. The sequence is that of Cathepsin D (CTSD) from Gallus gallus (Chicken).